Reading from the N-terminus, the 1758-residue chain is Y' element ATP-dependent helicase YJL225C (1758 aa).

The region spanning 668-845 (EIYMADTPSV…LQRIGLTGLA (178 aa)) is the Helicase ATP-binding domain. 681 to 688 (APPGYGKT) is a binding site for ATP. The region spanning 900 to 1051 (ALKLLLALFE…EFYGLESKKG (152 aa)) is the Helicase C-terminal domain. Residues 1142–1360 (NVRTNATTNA…ATTTESTNAS (219 aa)) are compositionally biased toward low complexity. Positions 1142 to 1384 (NVRTNATTNA…RFHPVTDINK (243 aa)) are disordered. The span at 1361–1384 (AKEDANKDGNAEDNRFHPVTDINK) shows a compositional bias: basic and acidic residues.

This sequence belongs to the helicase family. Yeast subtelomeric Y' repeat subfamily.

Catalyzes DNA unwinding and is involved in telomerase-independent telomere maintenance. This Saccharomyces cerevisiae (strain ATCC 204508 / S288c) (Baker's yeast) protein is Y' element ATP-dependent helicase YJL225C.